A 61-amino-acid chain; its full sequence is Photosystem II reaction center protein K (61 aa).

A propeptide spanning residues 1–24 (MPNILSLTCICFNSVIYPTSFFFA) is cleaved from the precursor. Residues 32–52 (IFNPIVDFMPVIPLFFFLLAF) form a helical membrane-spanning segment.

Belongs to the PsbK family. PSII is composed of 1 copy each of membrane proteins PsbA, PsbB, PsbC, PsbD, PsbE, PsbF, PsbH, PsbI, PsbJ, PsbK, PsbL, PsbM, PsbT, PsbX, PsbY, PsbZ, Psb30/Ycf12, at least 3 peripheral proteins of the oxygen-evolving complex and a large number of cofactors. It forms dimeric complexes.

It is found in the plastid. Its subcellular location is the chloroplast thylakoid membrane. In terms of biological role, one of the components of the core complex of photosystem II (PSII). PSII is a light-driven water:plastoquinone oxidoreductase that uses light energy to abstract electrons from H(2)O, generating O(2) and a proton gradient subsequently used for ATP formation. It consists of a core antenna complex that captures photons, and an electron transfer chain that converts photonic excitation into a charge separation. This Triticum aestivum (Wheat) protein is Photosystem II reaction center protein K.